The primary structure comprises 1155 residues: Probable translation initiation factor IF-2 (1155 aa).

One can recognise a DOD-type homing endonuclease domain in the interval 237-367 (FAGVMFGDGC…LSILLLRFEI (131 aa)). The tr-type G domain occupies 561–781 (TTETHNFIAN…VAGLAQKFLE (221 aa)). GTP-binding positions include 634-638 (DTPGH) and 688-691 (NKID).

It belongs to the TRAFAC class translation factor GTPase superfamily. Classic translation factor GTPase family. IF-2 subfamily. Post-translationally, this protein undergoes a protein self splicing that involves a post-translational excision of the intervening region (intein) followed by peptide ligation.

Function in general translation initiation by promoting the binding of the formylmethionine-tRNA to ribosomes. Seems to function along with eIF-2. This Methanocaldococcus jannaschii (strain ATCC 43067 / DSM 2661 / JAL-1 / JCM 10045 / NBRC 100440) (Methanococcus jannaschii) protein is Probable translation initiation factor IF-2 (infB).